The following is a 71-amino-acid chain: Biotinylated protein TB7.3 homolog (71 aa).

The region spanning 2–71 (AEDVRAEIVA…QAGDLIAVIS (70 aa)) is the Biotinyl-binding domain. Lys37 carries the post-translational modification N6-biotinyllysine.

This is Biotinylated protein TB7.3 homolog from Mycobacterium leprae (strain TN).